The primary structure comprises 436 residues: tRNA(Ile)-lysidine synthase (436 aa).

Residue 25-30 participates in ATP binding; the sequence is SGGLDS.

Belongs to the tRNA(Ile)-lysidine synthase family.

Its subcellular location is the cytoplasm. The catalysed reaction is cytidine(34) in tRNA(Ile2) + L-lysine + ATP = lysidine(34) in tRNA(Ile2) + AMP + diphosphate + H(+). Ligates lysine onto the cytidine present at position 34 of the AUA codon-specific tRNA(Ile) that contains the anticodon CAU, in an ATP-dependent manner. Cytidine is converted to lysidine, thus changing the amino acid specificity of the tRNA from methionine to isoleucine. In Serratia proteamaculans (strain 568), this protein is tRNA(Ile)-lysidine synthase.